Here is a 115-residue protein sequence, read N- to C-terminus: uncharacterized protein (115 aa).

This is an uncharacterized protein from Saccharomyces cerevisiae (strain ATCC 204508 / S288c) (Baker's yeast).